The sequence spans 455 residues: UDP-N-acetylmuramoylalanine--D-glutamate ligase (455 aa).

Residue 118-124 participates in ATP binding; the sequence is GTNGKST.

The protein belongs to the MurCDEF family.

It is found in the cytoplasm. It catalyses the reaction UDP-N-acetyl-alpha-D-muramoyl-L-alanine + D-glutamate + ATP = UDP-N-acetyl-alpha-D-muramoyl-L-alanyl-D-glutamate + ADP + phosphate + H(+). It participates in cell wall biogenesis; peptidoglycan biosynthesis. Its function is as follows. Cell wall formation. Catalyzes the addition of glutamate to the nucleotide precursor UDP-N-acetylmuramoyl-L-alanine (UMA). This is UDP-N-acetylmuramoylalanine--D-glutamate ligase from Myxococcus xanthus (strain DK1622).